Reading from the N-terminus, the 2507-residue chain is Putative neurobeachin homolog (2507 aa).

Disordered regions lie at residues 1-109 (MEIS…PPLP), 1307-1377 (PSSP…DGGR), and 1629-1649 (SRHE…EISE). Acidic residues predominate over residues 24-37 (PVEEGEEVNDEESN). Positions 1317–1340 (TTQKQENSENVNSETSPENGSNGK) are enriched in polar residues. Residues 1360–1372 (DGEEEENGEEGQG) show a composition bias toward acidic residues. Positions 1690 to 1798 (PSSQSACFST…AVKKVVYQLP (109 aa)) constitute a BEACH-type PH domain. Residues 1817–2106 (MTPRQLFKHS…QLLTEAHPPR (290 aa)) form the BEACH domain. WD repeat units follow at residues 2265-2308 (GHGD…GFIA), 2326-2365 (GHEA…LRRI), 2405-2444 (LVDD…KLYT), and 2447-2486 (PLNS…WHYE).

This sequence belongs to the WD repeat neurobeachin family. As to quaternary structure, interacts with RII subunit of PKA. In terms of tissue distribution, expressed in vulval precursor cells and rectal epithelia in L2 and L3 larvae. In L4 larvae, expression is seen in intestinal epithelial cells.

Its subcellular location is the cytoplasm. The protein localises to the membrane. The protein resides in the nucleus. Functionally, binds to type II regulatory subunits of protein kinase A and anchors/targets them to the membrane. May anchor the kinase to cytoskeletal and/or organelle-associated proteins. Regulates endosomal traffic in polarized epithelial cells such as the vulval precursor cells and intestinal cells. Thought to act as a negative regulator of lin-12 activity in vulval precursor cells. May have a role in the internalization process from basolateral surface of polarized epithelial cells. This is Putative neurobeachin homolog (sel-2) from Caenorhabditis elegans.